We begin with the raw amino-acid sequence, 96 residues long: Small ribosomal subunit protein bS16 (96 aa).

The protein belongs to the bacterial ribosomal protein bS16 family.

In Anaplasma phagocytophilum (strain HZ), this protein is Small ribosomal subunit protein bS16.